Consider the following 279-residue polypeptide: Alcohol dehydrogenase-related 31 kDa protein (279 aa).

11-34 (YVADCGGIALETSKVLMTKNIAKL) serves as a coordination point for NAD(+). Ser139 is a substrate binding site. The active-site Proton acceptor is the Tyr152.

This sequence belongs to the short-chain dehydrogenases/reductases (SDR) family.

The polypeptide is Alcohol dehydrogenase-related 31 kDa protein (Adhr) (Drosophila subobscura (Fruit fly)).